An 81-amino-acid polypeptide reads, in one-letter code: Trefoil factor 3 (81 aa).

Positions 1 to 22 are cleaved as a signal peptide; that stretch reads METRAFWTTLLLVLVAGSSCKA. Positions 31–74 constitute a P-type domain; it reads SQCMVPANVRVDCGYPTVTSEQCNNRGCCFDSSIPNVPWCFKPL. 3 disulfides stabilise this stretch: C33/C59, C43/C58, and C53/C70.

Monomer. Homodimer; disulfide-linked. Expressed in goblet cells of the intestines, and colon, in paraventricular hypothalamus and supraoptic nuclei. Weakly expressed in gastric epithelial cells (at protein level). Expressed by goblet cells of small and large intestinal epithelia, kidney and stomach. Expressed in the paraventricular hypothalamus, arcuate nucleus and amygdala of the brain. Weakly expressed in gastric epithelial cells.

The protein resides in the secreted. The protein localises to the extracellular space. Its subcellular location is the extracellular matrix. It localises to the cytoplasm. Its function is as follows. Involved in the maintenance and repair of the intestinal mucosa. Promotes the mobility of epithelial cells in healing processes (motogen). The sequence is that of Trefoil factor 3 (Tff3) from Rattus norvegicus (Rat).